A 350-amino-acid chain; its full sequence is UDP-N-acetylenolpyruvoylglucosamine reductase (350 aa).

The region spanning 24–195 (HVEATARWLL…VAVEFNLPLL (172 aa)) is the FAD-binding PCMH-type domain. Residue Arg-172 is part of the active site. Residue Ser-245 is the Proton donor of the active site. Glu-342 is a catalytic residue.

Belongs to the MurB family. FAD serves as cofactor.

It is found in the cytoplasm. It carries out the reaction UDP-N-acetyl-alpha-D-muramate + NADP(+) = UDP-N-acetyl-3-O-(1-carboxyvinyl)-alpha-D-glucosamine + NADPH + H(+). It functions in the pathway cell wall biogenesis; peptidoglycan biosynthesis. Functionally, cell wall formation. The sequence is that of UDP-N-acetylenolpyruvoylglucosamine reductase from Xanthomonas oryzae pv. oryzae (strain MAFF 311018).